Here is a 226-residue protein sequence, read N- to C-terminus: tRNA (guanine-N(1)-)-methyltransferase (226 aa).

S-adenosyl-L-methionine contacts are provided by residues Gly-110 and 129 to 134 (IGDYIL).

The protein belongs to the RNA methyltransferase TrmD family. Homodimer.

It is found in the cytoplasm. The enzyme catalyses guanosine(37) in tRNA + S-adenosyl-L-methionine = N(1)-methylguanosine(37) in tRNA + S-adenosyl-L-homocysteine + H(+). Functionally, specifically methylates guanosine-37 in various tRNAs. The sequence is that of tRNA (guanine-N(1)-)-methyltransferase from Malacoplasma penetrans (strain HF-2) (Mycoplasma penetrans).